The chain runs to 394 residues: Probable cytosolic iron-sulfur protein assembly protein 1 (394 aa).

WD repeat units follow at residues 10 to 49 (AHND…NFPL), 56 to 108 (AHKR…EQDS), 144 to 184 (GHEN…EEFE), 191 to 230 (DHQH…DDWS), 237 to 284 (GHGG…TEQI), 313 to 352 (IHKY…KWEI), and 359 to 394 (AHGV…IWEP).

Belongs to the WD repeat CIA1 family. Interacts with NAR1.

It is found in the cytoplasm. It localises to the nucleus. Essential component of the cytosolic iron-sulfur (Fe/S) protein assembly machinery. Required for the maturation of extramitochondrial Fe/S proteins. The sequence is that of Probable cytosolic iron-sulfur protein assembly protein 1 from Debaryomyces hansenii (strain ATCC 36239 / CBS 767 / BCRC 21394 / JCM 1990 / NBRC 0083 / IGC 2968) (Yeast).